The chain runs to 412 residues: Phospholipase A1-IIdelta (412 aa).

Residue A2 is modified to N-acetylalanine. S238 (acyl-ester intermediate) is an active-site residue. Active-site charge relay system residues include S238, D297, and H336.

The protein belongs to the AB hydrolase superfamily. Lipase family. As to expression, expressed in leaves, stems, flowers and siliques, and, at low levels, in seeds and roots (at protein level).

It is found in the cytoplasm. Functionally, acylhydrolase that catalyzes the hydrolysis of phosphatidylcholine (PC) at the sn-1 position. High activity toward PC, medium activity toward monogalactosyldiacylglycerol (MGDG) and low activity toward triacylglycerol (TAG). Confers sensitivity to UV-B radiation probably by deesterifying membrane phospholipids. This chain is Phospholipase A1-IIdelta, found in Arabidopsis thaliana (Mouse-ear cress).